Reading from the N-terminus, the 73-residue chain is Disintegrin barbourin (73 aa).

The 73-residue stretch at 1-73 (EAGEECDCGS…ADCPRNGLYG (73 aa)) folds into the Disintegrin domain. 6 disulfide bridges follow: cysteine 6/cysteine 21, cysteine 8/cysteine 16, cysteine 15/cysteine 38, cysteine 29/cysteine 35, cysteine 34/cysteine 59, and cysteine 47/cysteine 66. The short motif at 51–53 (KGD) is the Cell attachment site; atypical (KGD) element.

The protein belongs to the venom metalloproteinase (M12B) family. P-II subfamily. P-IIa sub-subfamily. As to quaternary structure, monomer. As to expression, expressed by the venom gland.

The protein localises to the secreted. Inhibitor of ligand binding to the integrins alpha-IIb/beta-3 (ITGA2B/ITGB3). Competition with fibrinogen for the RGD recognition sites on the alpha-IIb/beta-3 integrin results in the inhibition of platelet aggregation induced by ADP, thrombin, platelet-activating factor and collagen. The polypeptide is Disintegrin barbourin (Sistrurus miliarius barbouri (Dusky pigmy rattlesnake)).